We begin with the raw amino-acid sequence, 189 residues long: S-protein homolog 26 (189 aa).

The first 25 residues, 1–25 (MISMNRLSILLFVFAFGLTMMSNTA), serve as a signal peptide directing secretion.

Belongs to the plant self-incompatibility (S1) protein family.

Its subcellular location is the secreted. The chain is S-protein homolog 26 from Arabidopsis thaliana (Mouse-ear cress).